The following is a 473-amino-acid chain: 3-isopropylmalate dehydratase large subunit (473 aa).

Residues C348, C408, and C411 each coordinate [4Fe-4S] cluster. Residues 421-440 (GDEASASSSNRNFIGRQGSK) are disordered.

It belongs to the aconitase/IPM isomerase family. LeuC type 1 subfamily. In terms of assembly, heterodimer of LeuC and LeuD. It depends on [4Fe-4S] cluster as a cofactor.

It catalyses the reaction (2R,3S)-3-isopropylmalate = (2S)-2-isopropylmalate. Its pathway is amino-acid biosynthesis; L-leucine biosynthesis; L-leucine from 3-methyl-2-oxobutanoate: step 2/4. In terms of biological role, catalyzes the isomerization between 2-isopropylmalate and 3-isopropylmalate, via the formation of 2-isopropylmaleate. The chain is 3-isopropylmalate dehydratase large subunit from Haloferax volcanii (strain ATCC 29605 / DSM 3757 / JCM 8879 / NBRC 14742 / NCIMB 2012 / VKM B-1768 / DS2) (Halobacterium volcanii).